The following is a 556-amino-acid chain: Zinc finger protein 18 (556 aa).

Residues 41–123 (RQLFRQFRYQ…TLVESLKGEP (83 aa)) form the SCAN box domain. The segment at 169–195 (QDLPLQNSSSATGELLSHGVKEESDME) is disordered. In terms of domain architecture, KRAB spans 218-291 (ELGTAVLPPL…HLHGAEKMAR (74 aa)). C2H2-type zinc fingers lie at residues 415–437 (PTCR…QRTH), 443–465 (FHCH…QRTH), 471–493 (CKCD…EKIH), 499–521 (YKCP…QRVH), and 527–549 (YKCT…QRSH).

Belongs to the krueppel C2H2-type zinc-finger protein family.

It localises to the nucleus. Functionally, may be involved in transcriptional regulation. This chain is Zinc finger protein 18 (Znf18), found in Mus musculus (Mouse).